Consider the following 533-residue polypeptide: Acyl-CoA-binding domain-containing protein 5 (533 aa).

The ACB domain maps to 42 to 131 (HETRFEAAVK…MKKILETMPM (90 aa)). Residues 53–62 (IQSLPKNGSF), 73–77 (YSFYK), Lys99, and Tyr118 each bind an acyl-CoA. The tract at residues 182–227 (TPNAKTVNGKAESSDSGAESEEEAAQEDPKRPEPRDSDKKMMKKSA) is disordered. Phosphoserine is present on residues Ser194, Ser195, Ser197, and Ser201. Residues 208–227 (EDPKRPEPRDSDKKMMKKSA) show a composition bias toward basic and acidic residues. Phosphoserine is present on residues Ser244 and Ser314. The tract at residues 339-443 (GGNPSQPLES…ERWGSDRGSR (105 aa)) is disordered. Residues 374–383 (GKGEVKRGGE) show a composition bias toward basic and acidic residues. Ser429 carries the phosphoserine modification. Residues 432 to 442 (DGERWGSDRGS) show a composition bias toward basic and acidic residues. The stretch at 448–478 (EQIALVLMRLQEDMQNVLQRLHKLEMLAASQ) forms a coiled coil. Position 470 is an N6-acetyllysine (Lys470). The chain crosses the membrane as a helical span at residues 503 to 525 (SPGALTFAIIWPFIAQWLVHLYY).

This sequence belongs to the ATG37 family. Highly expressed in brain and liver. Lower levels of expression in spleen and heart.

It is found in the peroxisome membrane. Functionally, acyl-CoA binding protein which acts as the peroxisome receptor for pexophagy but is dispensable for aggrephagy and nonselective autophagy. Binds medium- and long-chain acyl-CoA esters. The chain is Acyl-CoA-binding domain-containing protein 5 (ACBD5) from Bos taurus (Bovine).